Reading from the N-terminus, the 346-residue chain is NADH-quinone oxidoreductase subunit H (346 aa).

8 helical membrane passes run isoleucine 6–tyrosine 26, valine 76–valine 96, isoleucine 128–alanine 148, isoleucine 166–leucine 186, leucine 198–phenylalanine 218, isoleucine 260–isoleucine 280, leucine 289–valine 309, and leucine 324–isoleucine 344.

This sequence belongs to the complex I subunit 1 family. NDH-1 is composed of 14 different subunits. Subunits NuoA, H, J, K, L, M, N constitute the membrane sector of the complex.

The protein resides in the cell inner membrane. The enzyme catalyses a quinone + NADH + 5 H(+)(in) = a quinol + NAD(+) + 4 H(+)(out). Functionally, NDH-1 shuttles electrons from NADH, via FMN and iron-sulfur (Fe-S) centers, to quinones in the respiratory chain. The immediate electron acceptor for the enzyme in this species is believed to be ubiquinone. Couples the redox reaction to proton translocation (for every two electrons transferred, four hydrogen ions are translocated across the cytoplasmic membrane), and thus conserves the redox energy in a proton gradient. This subunit may bind ubiquinone. This is NADH-quinone oxidoreductase subunit H from Leptospira interrogans serogroup Icterohaemorrhagiae serovar copenhageni (strain Fiocruz L1-130).